Consider the following 211-residue polypeptide: MEYISPFDRFIRHFDSALRVMSGVSAASRPSPASGVADGVLDDAERRHSAGLMRVNHVGEVCAQALYQAQAQFAHSDAIKQQFELAGREEEDHLAWTAQRLRELGSHPSLLNPLWYAGAYALGTVAAKLGDARSLGFVVETERQVEAHLNEHMNRLPPQDAKSLAVVAQMSADEVAHGSAAQALGAQAVPPLAQKGMQAISKIMTTTAYYI.

Fe cation-binding residues include E60, E90, H93, E142, E174, and H177.

This sequence belongs to the COQ7 family. Fe cation serves as cofactor.

The protein localises to the cell membrane. The catalysed reaction is a 5-methoxy-2-methyl-3-(all-trans-polyprenyl)benzene-1,4-diol + AH2 + O2 = a 3-demethylubiquinol + A + H2O. The protein operates within cofactor biosynthesis; ubiquinone biosynthesis. Catalyzes the hydroxylation of 2-nonaprenyl-3-methyl-6-methoxy-1,4-benzoquinol during ubiquinone biosynthesis. This Herminiimonas arsenicoxydans protein is 3-demethoxyubiquinol 3-hydroxylase.